We begin with the raw amino-acid sequence, 207 residues long: DNA-directed RNA polymerase subunit alpha (207 aa).

The protein belongs to the RNA polymerase alpha chain family. In terms of assembly, in plastids the minimal PEP RNA polymerase catalytic core is composed of four subunits: alpha, beta, beta', and beta''. When a (nuclear-encoded) sigma factor is associated with the core the holoenzyme is formed, which can initiate transcription.

It is found in the plastid. It localises to the chloroplast. It catalyses the reaction RNA(n) + a ribonucleoside 5'-triphosphate = RNA(n+1) + diphosphate. Functionally, DNA-dependent RNA polymerase catalyzes the transcription of DNA into RNA using the four ribonucleoside triphosphates as substrates. The sequence is that of DNA-directed RNA polymerase subunit alpha (rpoA) from Euglena myxocylindracea.